Here is a 1077-residue protein sequence, read N- to C-terminus: MESSRSLLGCLASATAAPPGDDATGAGAEEEEDEEEAAAELGSHAALPYWTAVFEYEAAGEDELTLRLGDVVEVLSKDSQVSGDEGWWTGQLNQRVGIFPSNYVTPRSAFSSRCQPGAEDPSCYPPIQLLEIDFAELTLEEIIGIGGFGKVYRAFWAGDEVAVKAARHDPDEDISQTIENVRQEAKLFAMLKHPNIIALRGVCLKEPNLCLVMEFARGGPLNRVLSGKRIPPDILVNWAVQIARGMNYLHDEAIVPIIHRDLKSSNILILQKVENGDLSNKILKITDFGLAREWHRTTKMSAAGTYAWMAPEVIRASMFSKGSDVWSYGVLLWELLTGEVPFRGIDGLAVAYGVAMNKLALPIPSTCPEPFAKLMEDCWNPDPHSRPSFTSILDQLTTIEESGFFEMPKDSFHCLQDDWKHEIQEMFDQLRAKEKELRTWEEELTRAALQQKNQEELLRRREQELAEREIDILERELNIIIHQLCQEKPRVKKRKGKFRKSRLKLKDGNRISLPSDFQHKFTVQASPTMDKRKSLISNRSSPPASPTIIPRLRAIQLTPGESSKTWGRSSVVPKEEGEEEEKRAPKKKGRTWGPGTLGQKELTSGDEGLKSLVDGYKQWSSSAPNLGKGPRSSPALPGFTSLMEIEDEDSEGPGSGENHQQHSPNQSYLCIPFPRGEDGDGPSSDGVHEEPTPVNSATSTPQLTPTNSLKRGGTHHRRCEVALLGCGAVLAATGLGFDLLEAGKCQLLPPEEPEPPAREEKKRREGLFQRASRPRRSTSPPSRKLFKKEEPMTLLGDPSASLTLLSLSSISECNSTRSLLRSDSDEIVVYEMPVSPVEAPPLTQCTHNPLVNVRVERFKRDPNQSLTPTHVTLTAPTQPSGHRRTPSDGALKPTAAPAVLGSRSPSSNGMSPSPGTGMLKTPSPSRDPGEFPRLPDPNVVFPPTPRRWNTQRDSTLERPKTLEFLPRPRPSANRQRLDPWWFVSPSHARSASPANSSSTETPSNLDSCFASSSSTVEERPGLPALLPLQAGPLLPAERTLLDLDAEGQSQDSTVPLCRAELNAHGPSPYEIQQEFWS.

Positions M1–E40 are disordered. Residues A14–G27 show a composition bias toward low complexity. Residues A28–A38 show a composition bias toward acidic residues. Residues A45 to A109 enclose the SH3 domain. Residues L137–F405 enclose the Protein kinase domain. Residues I143–V151 and K164 contribute to the ATP site. The Proton acceptor role is filled by D261. Residues T297 and T298 each carry the phosphothreonine; by autocatalysis modification. Position 301 is a phosphoserine; by autocatalysis (S301). Position 305 is a phosphothreonine; by autocatalysis (T305). Leucine-zipper stretches follow at residues I423–L444 and L458–I479. Residues V491 to L503 show a composition bias toward basic residues. Disordered regions lie at residues V491 to I511, S526 to D606, E646 to G713, L748 to E790, R860 to S971, and S986 to S1011. S526 carries the phosphoserine modification. 2 stretches are compositionally biased toward polar residues: residues P559–R568 and P693–L709. A compositionally biased stretch (basic and acidic residues) spans P755 to L767. Residues N863–S880 are compositionally biased toward polar residues. Residues G901–G915 show a composition bias toward low complexity. Residues H987 to S1011 are compositionally biased toward polar residues.

The protein belongs to the protein kinase superfamily. STE Ser/Thr protein kinase family. MAP kinase kinase kinase subfamily. In terms of assembly, homodimer. Mg(2+) is required as a cofactor. In terms of processing, autophosphorylation on serine and threonine residues within the activation loop plays a role in enzyme activation. Thr-305 is likely to be the main autophosphorylation site. Autophosphorylation also occurs on Thr-297 and Ser-301. As to expression, expressed in cochlea and utricle.

The catalysed reaction is L-seryl-[protein] + ATP = O-phospho-L-seryl-[protein] + ADP + H(+). The enzyme catalyses L-threonyl-[protein] + ATP = O-phospho-L-threonyl-[protein] + ADP + H(+). Homodimerization via the leucine zipper domains is required for autophosphorylation of multiple sites in the activation loop and subsequent activation. Autophosphorylation at Thr-305 is the key step in activation of MAP3K9/MLK1 and is required for full phosphorylation. Autophosphorylation at Thr-297 and Ser-301 have been shown to be of secondary importance in the activation of MAP3K9/MLK1. Serine/threonine kinase which acts as an essential component of the MAP kinase signal transduction pathway. Plays an important role in the cascades of cellular responses evoked by changes in the environment. Once activated, acts as an upstream activator of the MKK/JNK signal transduction cascade through the phosphorylation of MAP2K4/MKK4 and MAP2K7/MKK7 which in turn activate the JNKs. The MKK/JNK signaling pathway regulates stress response via activator protein-1 (JUN) and GATA4 transcription factors. Also plays a role in mitochondrial death signaling pathway, including the release cytochrome c, leading to apoptosis. The polypeptide is Mitogen-activated protein kinase kinase kinase 9 (Map3k9) (Mus musculus (Mouse)).